The following is a 107-amino-acid chain: Putative nucleosome assembly protein 1-like 6 (107 aa).

The protein belongs to the nucleosome assembly protein (NAP) family.

The polypeptide is Putative nucleosome assembly protein 1-like 6 (Homo sapiens (Human)).